The following is a 261-amino-acid chain: uncharacterized protein (261 aa).

This is an uncharacterized protein from Bacillus subtilis (strain 168).